The sequence spans 546 residues: Cyclic GMP-AMP synthase-like receptor (546 aa).

Residues 1–10 show a composition bias toward polar residues; sequence MPVGSRQNRV. Disordered stretches follow at residues 1-116 and 134-186; these read MPVG…CASR and AKQE…RLTN. The segment covering 35 to 45 has biased composition (basic and acidic residues); that stretch reads YTERKERKDVQ. Residues 69 to 80 are compositionally biased toward low complexity; the sequence is TSRTLRQTSQSR. Basic and acidic residues-rich tracts occupy residues 82-95 and 145-174; these read EVLE…DCKK and KEGY…DKAT. Residues 175 to 186 are compositionally biased toward polar residues; sequence SHSTKGSFRLTN. ATP-binding positions include Ser-243 and 255–257; that span reads EFD. Positions 255, 257, and 374 each coordinate Mg(2+). Residues Asp-374 and 428 to 435 contribute to the GTP site; that span reads RTSFSLAE. ATP contacts are provided by residues 432-435, Lys-455, and 470-474; these read SLAE and SYHLK.

The protein belongs to the mab-21 family. Mg(2+) serves as cofactor. It depends on Mn(2+) as a cofactor.

It carries out the reaction GTP + ATP = 2',3'-cGAMP + 2 diphosphate. It catalyses the reaction GTP + ATP = pppGp(2'-5')A + diphosphate. The enzyme catalyses pppGp(2'-5')A = 2',3'-cGAMP + diphosphate. Nucleotidyltransferase that catalyzes the formation of cyclic GMP-AMP (2',3'-cGAMP) from ATP and GTP and plays a key role in innate immunity. Directly binds some unknown ligand, activating the nucleotidyltransferase activity, leading to synthesis of 2',3'-cGAMP, a second messenger that binds to and activates Sting, thereby triggering the immune response via activation of the NF-kappa-B transcription factor. This Exaiptasia diaphana (Tropical sea anemone) protein is Cyclic GMP-AMP synthase-like receptor.